The primary structure comprises 66 residues: Sec-independent protein translocase protein TatA (66 aa).

The chain crosses the membrane as a helical span at residues 1-21; the sequence is MSIGIWQIAIVVILVVLLFGR. Positions 43–66 are disordered; the sequence is ATDITDEPEPKNVSENNQDSKDKE. Over residues 50 to 66 the composition is skewed to basic and acidic residues; it reads PEPKNVSENNQDSKDKE.

It belongs to the TatA/E family. As to quaternary structure, the Tat system comprises two distinct complexes: a TatABC complex, containing multiple copies of TatA, TatB and TatC subunits, and a separate TatA complex, containing only TatA subunits. Substrates initially bind to the TatABC complex, which probably triggers association of the separate TatA complex to form the active translocon.

The protein resides in the cell inner membrane. Its function is as follows. Part of the twin-arginine translocation (Tat) system that transports large folded proteins containing a characteristic twin-arginine motif in their signal peptide across membranes. TatA could form the protein-conducting channel of the Tat system. The chain is Sec-independent protein translocase protein TatA from Pelagibacter ubique (strain HTCC1062).